The chain runs to 110 residues: Large ribosomal subunit protein uL22 (110 aa).

Belongs to the universal ribosomal protein uL22 family. Part of the 50S ribosomal subunit.

In terms of biological role, this protein binds specifically to 23S rRNA; its binding is stimulated by other ribosomal proteins, e.g. L4, L17, and L20. It is important during the early stages of 50S assembly. It makes multiple contacts with different domains of the 23S rRNA in the assembled 50S subunit and ribosome. Its function is as follows. The globular domain of the protein is located near the polypeptide exit tunnel on the outside of the subunit, while an extended beta-hairpin is found that lines the wall of the exit tunnel in the center of the 70S ribosome. In Solidesulfovibrio magneticus (strain ATCC 700980 / DSM 13731 / RS-1) (Desulfovibrio magneticus), this protein is Large ribosomal subunit protein uL22.